The sequence spans 404 residues: Multidrug resistance protein MdtG (404 aa).

The next 11 membrane-spanning stretches (helical) occupy residues 19–39 (LGCF…PLYV), 56–76 (LVFS…GGLA), 90–110 (LGMA…QFLI), 113–133 (ALLG…ATQV), 144–164 (TLST…GLLA), 171–191 (PVFF…FFFI), 222–242 (LFVT…ILTL), 254–274 (IAFI…LSAP), 288–308 (ILIV…FVQT), 317–337 (FLLG…LVYN), and 376–396 (AVFC…WNSL).

This sequence belongs to the major facilitator superfamily. DHA1 family. MdtG (TC 2.A.1.2.20) subfamily.

The protein resides in the cell inner membrane. The chain is Multidrug resistance protein MdtG from Salmonella typhimurium (strain LT2 / SGSC1412 / ATCC 700720).